Consider the following 236-residue polypeptide: Probable metal transport system ATP-binding protein CT_416 (236 aa).

One can recognise an ABC transporter domain in the interval 5–236 (MLLENVSFRY…FCCNTFGRCP (232 aa)). Residue 39-46 (GPNGGGKT) participates in ATP binding.

This sequence belongs to the ABC transporter superfamily.

It localises to the cell inner membrane. In terms of biological role, part of an ATP-driven transport system CT_415/CT_416/CT_417 for a metal. Probably responsible for energy coupling to the transport system. This chain is Probable metal transport system ATP-binding protein CT_416, found in Chlamydia trachomatis serovar D (strain ATCC VR-885 / DSM 19411 / UW-3/Cx).